We begin with the raw amino-acid sequence, 286 residues long: Bifunctional protein FolD (286 aa).

Residues 163-165 (GMS), I188, and I229 each bind NADP(+).

It belongs to the tetrahydrofolate dehydrogenase/cyclohydrolase family. Homodimer.

The enzyme catalyses (6R)-5,10-methylene-5,6,7,8-tetrahydrofolate + NADP(+) = (6R)-5,10-methenyltetrahydrofolate + NADPH. The catalysed reaction is (6R)-5,10-methenyltetrahydrofolate + H2O = (6R)-10-formyltetrahydrofolate + H(+). The protein operates within one-carbon metabolism; tetrahydrofolate interconversion. In terms of biological role, catalyzes the oxidation of 5,10-methylenetetrahydrofolate to 5,10-methenyltetrahydrofolate and then the hydrolysis of 5,10-methenyltetrahydrofolate to 10-formyltetrahydrofolate. The polypeptide is Bifunctional protein FolD (Helicobacter hepaticus (strain ATCC 51449 / 3B1)).